A 981-amino-acid chain; its full sequence is Anoctamin-3 (981 aa).

Positions 1–22 are enriched in polar residues; it reads MVHHSGSIQSFKQQKGMNISKS. The disordered stretch occupies residues 1–33; it reads MVHHSGSIQSFKQQKGMNISKSEITKETSLKPS. The Cytoplasmic segment spans residues 1–403; it reads MVHHSGSIQS…LYFAWLGWYT (403 aa). A helical membrane pass occupies residues 404–424; it reads GMLIPAAIVGLCVFFYGLFTM. N-linked (GlcNAc...) asparagine glycosylation is found at asparagine 425, asparagine 448, and asparagine 455. The Extracellular portion of the chain corresponds to 425–469; sequence NNSQVSQEICKATEVFMCPLCDKNCSLQRLNDSCIYAKVTYLFDN. The chain crosses the membrane as a helical span at residues 470–490; sequence GGTVFFAIFMAIWATVFLEFW. Residues 491-550 are Cytoplasmic-facing; it reads KRRRSILTYTWDLIEWEEEEETLRPQFEAKYYKMEIVNPITGKPEPHQPSSDKVTRLLVS. Residues 551 to 571 form a helical membrane-spanning segment; it reads VSGIFFMISLVITAVFGVVVY. The Extracellular portion of the chain corresponds to 572–592; the sequence is RLVVMEQFASFKWNFIKQYWQ. The helical transmembrane segment at 593–613 threads the bilayer; sequence FATSAAAVCINFIIIMLLNLA. Residues 614–640 are Cytoplasmic-facing; that stretch reads YEKIAYLLTNLEYPRTESEWENSFALK. Residues 641-661 traverse the membrane as a helical segment; that stretch reads MFLFQFVNLNSSIFYIAFFLG. Residues 662–761 are Extracellular-facing; that stretch reads RFVGHPGKYN…MDEYLEMVLQ (100 aa). A helical membrane pass occupies residues 762–782; the sequence is FGFTTIFVAAFPLAPLLALLN. The Cytoplasmic portion of the chain corresponds to 783–810; that stretch reads NIIEIRLDAYKFVTQWRRPLPARATDIG. A helical transmembrane segment spans residues 811 to 831; the sequence is IWLGILEGIGILAVITNAFVI. Residues 832–914 are Extracellular-facing; sequence AITSDYIPRF…QYWHILAARL (83 aa). An N-linked (GlcNAc...) asparagine glycan is attached at asparagine 866. The helical transmembrane segment at 915-935 threads the bilayer; the sequence is AFIIVFEHLVFGIKSFIAYLI. Residues 936–981 are Cytoplasmic-facing; the sequence is PDVPKGLHDRIRREKYLVQEMMYEAELEHLQQQRRKSGQPVHHEWP.

Belongs to the anoctamin family. As to quaternary structure, interacts with KCNT1/Slack. Highly expressed in the forebrain striatum.

The protein resides in the cell membrane. The catalysed reaction is a 1,2-diacyl-sn-glycero-3-phosphocholine(in) = a 1,2-diacyl-sn-glycero-3-phosphocholine(out). It carries out the reaction a beta-D-galactosyl-(1&lt;-&gt;1')-N-acylsphing-4-enine(out) = a beta-D-galactosyl-(1&lt;-&gt;1')-N-acylsphing-4-enine(in). Functionally, has calcium-dependent phospholipid scramblase activity; scrambles phosphatidylcholine and galactosylceramide. Seems to act as potassium channel regulator and may inhibit pain signaling; can facilitate KCNT1/Slack channel activity by promoting its full single-channel conductance at very low sodium concentrations and by increasing its sodium sensitivity. Does not exhibit calcium-activated chloride channel (CaCC) activity. This Homo sapiens (Human) protein is Anoctamin-3 (ANO3).